Reading from the N-terminus, the 297-residue chain is Lipoyl synthase (297 aa).

7 residues coordinate [4Fe-4S] cluster: Cys34, Cys39, Cys45, Cys60, Cys64, Cys67, and Ser273. A Radical SAM core domain is found at Trp46 to Leu262.

The protein belongs to the radical SAM superfamily. Lipoyl synthase family. It depends on [4Fe-4S] cluster as a cofactor.

Its subcellular location is the cytoplasm. It carries out the reaction [[Fe-S] cluster scaffold protein carrying a second [4Fe-4S](2+) cluster] + N(6)-octanoyl-L-lysyl-[protein] + 2 oxidized [2Fe-2S]-[ferredoxin] + 2 S-adenosyl-L-methionine + 4 H(+) = [[Fe-S] cluster scaffold protein] + N(6)-[(R)-dihydrolipoyl]-L-lysyl-[protein] + 4 Fe(3+) + 2 hydrogen sulfide + 2 5'-deoxyadenosine + 2 L-methionine + 2 reduced [2Fe-2S]-[ferredoxin]. The protein operates within protein modification; protein lipoylation via endogenous pathway; protein N(6)-(lipoyl)lysine from octanoyl-[acyl-carrier-protein]: step 2/2. Catalyzes the radical-mediated insertion of two sulfur atoms into the C-6 and C-8 positions of the octanoyl moiety bound to the lipoyl domains of lipoate-dependent enzymes, thereby converting the octanoylated domains into lipoylated derivatives. The protein is Lipoyl synthase of Ehrlichia chaffeensis (strain ATCC CRL-10679 / Arkansas).